The sequence spans 671 residues: Phosphoenolpyruvate carboxykinase (ATP) 1 (671 aa).

Over residues 1 to 10 (MSAGNGNATN) the composition is skewed to low complexity. The interval 1 to 44 (MSAGNGNATNGDGGFSFPKGPVMPKITTGAAKRGSGVCHDDSGP) is disordered. An N-acetylserine modification is found at Ser2. Phosphoserine is present on Ser62. Phosphothreonine is present on Thr66. The interval 100-127 (TRESGPKVVRGDPAEKKTDGSTTPAYAH) is disordered. A compositionally biased stretch (basic and acidic residues) spans 108-118 (VRGDPAEKKTD). Position 189 (Arg189) interacts with substrate. Ca(2+)-binding residues include His270 and Asn271. Substrate contacts are provided by Tyr328 and Lys334. Residues Lys334, His353, and 369-377 (GLSGTGKTT) each bind ATP. 2 residues coordinate Mn(2+): Lys334 and His353. A Mn(2+)-binding site is contributed by Asp390. Gly404 contributes to the Ca(2+) binding site. Residues Glu418, Arg455, 574-575 (RI), Ile575, and Thr580 each bind ATP. Arg455 is a substrate binding site.

This sequence belongs to the phosphoenolpyruvate carboxykinase (ATP) family. In terms of assembly, monomer. The cofactor is Mn(2+). As to expression, expressed in cotyledons, flowers, siliques, seeds, leaves, stems and roots. Localized in mid-veins.

The protein resides in the cytoplasm. The catalysed reaction is oxaloacetate + ATP = phosphoenolpyruvate + ADP + CO2. The protein operates within carbohydrate biosynthesis; gluconeogenesis. Its activity is regulated as follows. Allosterically activated by calcium. It may represent the only case of a monomeric, allosteric enzyme. Its function is as follows. Involved in the gluconeogenesis. Catalyzes the conversion of oxaloacetate (OAA) to phosphoenolpyruvate (PEP) through direct phosphoryl transfer between the nucleoside triphosphate and OAA. The chain is Phosphoenolpyruvate carboxykinase (ATP) 1 from Arabidopsis thaliana (Mouse-ear cress).